The sequence spans 254 residues: Long form salivary protein D7LC (254 aa).

The signal sequence occupies residues 1–19 (MNAVITSLLFLSLVGLGYS). 2 disulfide bridges follow: Cys-36/Cys-66 and Cys-62/Cys-112. Trp-49 contributes to the thromboxane A2 binding site. Trp-52 is a leukotriene C4 binding site. A thromboxane A2-binding site is contributed by Tyr-63. Leukotriene C4 is bound by residues Gly-136 and Lys-154. Position 154 (Lys-154) interacts with thromboxane A2. 3 disulfide bridges follow: Cys-162-Cys-178, Cys-174-Cys-221, and Cys-211-Cys-230.

Belongs to the PBP/GOBP family.

The protein localises to the secreted. Its function is as follows. Modulates blood feeding of female sandflies on vertebrate species by binding and sequestering different mediators involved in the host response. Binds leukotriene C4, leukotriene D4, leukotriene E4 and U-46619, a stable analog of thromboxane A2. Does not bind histamine or serotonin. Inhibits platelet aggregation induced by low concentrations of collagen in thromboxane A2-dependent manner. In Phlebotomus papatasi (Sandfly), this protein is Long form salivary protein D7LC.